The following is a 455-amino-acid chain: Rhodopsin (455 aa).

Topologically, residues 1-34 are extracellular; the sequence is MVESTTLVNQTWWYNPTVDIHPHWAKFDPIPDAV. An N-linked (GlcNAc...) asparagine glycan is attached at asparagine 9. Residues 35-59 form a helical membrane-spanning segment; it reads YYSVGIFIGVVGIIGILGNGVVIYL. Topologically, residues 60-71 are cytoplasmic; that stretch reads FSKTKSLQTPAN. A helical membrane pass occupies residues 72–98; that stretch reads MFIINLAMSDLSFSAINGFPLKTISAF. Residues 99–110 are Extracellular-facing; the sequence is MKKWIFGKVACQ. The cysteines at positions 109 and 187 are disulfide-linked. The helical transmembrane segment at 111–132 threads the bilayer; that stretch reads LYGLLGGIFGFMSINTMAMISI. The 'Ionic lock' involved in activated form stabilization signature appears at 133–135; it reads DRY. At 133 to 152 the chain is on the cytoplasmic side; the sequence is DRYNVIGRPMAASKKMSHRR. The helical transmembrane segment at 153 to 173 threads the bilayer; the sequence is AFLMIIFVWMWSIVWSVGPVF. At 174-200 the chain is on the extracellular side; sequence NWGAYVPEGILTSCSFDYLSTDPSTRS. Residues 201-225 form a helical membrane-spanning segment; that stretch reads FILCMYFCGFMLPIIIIAFCYFNIV. Topologically, residues 226-262 are cytoplasmic; sequence MSVSNHEKEMAAMAKRLNAKELRKAQAGASAEMKLAK. A helical membrane pass occupies residues 263–284; sequence ISMVIITQFMLSWSPYAIIALL. Residues 285–294 are Extracellular-facing; sequence AQFGPAEWVT. Residues 295-316 form a helical membrane-spanning segment; it reads PYAAELPVLFAKASAIHNPIVY. An N6-(retinylidene)lysine modification is found at lysine 306. The Cytoplasmic portion of the chain corresponds to 317–455; the sequence is SVSHPKFREA…QGVDNQAYQA (139 aa). 2 S-palmitoyl cysteine lipidation sites follow: cysteine 337 and cysteine 338. Low complexity predominate over residues 378-387; sequence QKMQAQQAAY. The disordered stretch occupies residues 378-455; the sequence is QKMQAQQAAY…QGVDNQAYQA (78 aa). Over residues 388–433 the composition is skewed to pro residues; that stretch reads QPPPPPQGYPPQGYPPQGAYPPPQGYPPQGYPPQGYPPQGYPPQGA. 6 tandem repeats follow at residues 395-399, 400-404, 412-416, 417-421, 422-426, and 427-431. The segment at 395 to 431 is 6 X 5 AA repeats of G-Y-P-P-Q; the sequence is GYPPQGYPPQGAYPPPQGYPPQGYPPQGYPPQGYPPQ.

The protein belongs to the G-protein coupled receptor 1 family. Opsin subfamily. Post-translationally, contains one covalently linked retinal chromophore. Upon light absorption, the covalently bound 11-cis-retinal is converted to all-trans-retinal. After hydrolysis of the Schiff base and release of the covalently bound all-trans-retinal, active rhodopsin is regenerated by binding of a fresh molecule of 11-cis-retinal.

It localises to the cell projection. It is found in the rhabdomere membrane. In terms of biological role, photoreceptor required for image-forming vision at low light intensity. Light-induced isomerization of 11-cis to all-trans retinal triggers a conformational change that activates signaling via G-proteins. Signaling mediates the activation of phospholipase C. Subsequent receptor phosphorylation mediates displacement of the bound G-protein alpha subunit by arrestin and terminates signaling. This is Rhodopsin (RHO) from Enteroctopus dofleini (North Pacific giant octopus).